The following is a 474-amino-acid chain: Glutamate--tRNA ligase (474 aa).

A 'HIGH' region motif is present at residues 11-21; sequence PSPTGFLHIGG. The 'KMSKS' region signature appears at 240–244; sequence KLSKR. ATP is bound at residue Lys243.

This sequence belongs to the class-I aminoacyl-tRNA synthetase family. Glutamate--tRNA ligase type 1 subfamily. Monomer.

Its subcellular location is the cytoplasm. It carries out the reaction tRNA(Glu) + L-glutamate + ATP = L-glutamyl-tRNA(Glu) + AMP + diphosphate. Functionally, catalyzes the attachment of glutamate to tRNA(Glu) in a two-step reaction: glutamate is first activated by ATP to form Glu-AMP and then transferred to the acceptor end of tRNA(Glu). This chain is Glutamate--tRNA ligase, found in Bradyrhizobium sp. (strain BTAi1 / ATCC BAA-1182).